Consider the following 575-residue polypeptide: Proline--tRNA ligase, cytoplasmic (575 aa).

It belongs to the class-II aminoacyl-tRNA synthetase family.

It localises to the cytoplasm. The catalysed reaction is tRNA(Pro) + L-proline + ATP = L-prolyl-tRNA(Pro) + AMP + diphosphate. This chain is Proline--tRNA ligase, cytoplasmic (PRS), found in Candida albicans (Yeast).